We begin with the raw amino-acid sequence, 90 residues long: uncharacterized protein (90 aa).

Positions 1–21 are cleaved as a signal peptide; sequence MFKFSIPLLLFIFLFFSCINS. The disordered stretch occupies residues 56–90; it reads SNEKLPERILSGSSGSCSSCSISSSNGSSSRSSKQ. The span at 66 to 90 shows a compositional bias: low complexity; that stretch reads SGSSGSCSSCSISSSNGSSSRSSKQ. N-linked (GlcNAc...) asparagine glycosylation occurs at asparagine 81.

This is an uncharacterized protein from Dictyostelium discoideum (Social amoeba).